Consider the following 609-residue polypeptide: DNA polymerase alpha subunit B (609 aa).

Ser155 carries the phosphoserine modification. Thr164 carries the phosphothreonine modification. Ser166 and Ser168 each carry phosphoserine.

This sequence belongs to the DNA polymerase alpha subunit B family. Component of the alpha DNA polymerase complex (also known as the alpha DNA polymerase-primase complex) consisting of four subunits: the catalytic subunit PolA1, the regulatory subunit PolA2, and the primase complex subunits Prim1 and Prim2 respectively. PolA1 associates with the DNA primase complex before association with PolA2. Phosphorylated in embryos until cycle 13. Expressed in embryos (at protein level).

Its subcellular location is the nucleus. Functionally, accessory subunit of the DNA polymerase alpha complex (also known as the alpha DNA polymerase-primase complex) which plays an essential role in the initiation of DNA synthesis. During the S phase of the cell cycle, the DNA polymerase alpha complex (composed of a catalytic subunit PolA1, an accessory subunit PolA2 and two primase subunits, the catalytic subunit Prim1 and the regulatory subunit Prim2) is recruited to DNA at the replicative forks. The primase subunit of the polymerase alpha complex initiates DNA synthesis by oligomerising short RNA primers on both leading and lagging strands. These primers are initially extended by the polymerase alpha catalytic subunit and subsequently transferred to polymerase delta and polymerase epsilon for processive synthesis on the lagging and leading strand, respectively. The chain is DNA polymerase alpha subunit B from Drosophila melanogaster (Fruit fly).